Here is a 138-residue protein sequence, read N- to C-terminus: Large ribosomal subunit protein uL16 (138 aa).

Over residues 1-17 (MLIPRKVKHRKQHHPRQ) the composition is skewed to basic residues. Positions 1–22 (MLIPRKVKHRKQHHPRQRGIAS) are disordered.

Belongs to the universal ribosomal protein uL16 family. In terms of assembly, part of the 50S ribosomal subunit.

Its function is as follows. Binds 23S rRNA and is also seen to make contacts with the A and possibly P site tRNAs. The polypeptide is Large ribosomal subunit protein uL16 (Mycobacterium avium (strain 104)).